Consider the following 147-residue polypeptide: Interleukin-4 (147 aa).

Residues 1-19 (MGLRPQLAAILLCLLACTG) form the signal peptide. N-linked (GlcNAc...) asparagine glycosylation is found at Asn-20, Asn-61, Asn-90, and Asn-117. 2 disulfide bridges follow: Cys-47/Cys-87 and Cys-69/Cys-114.

This sequence belongs to the IL-4/IL-13 family.

Its subcellular location is the secreted. In terms of biological role, participates in at least several B-cell activation processes as well as of other cell types. It is a costimulator of DNA-synthesis. It induces the expression of class II MHC molecules on resting B-cells. It enhances both secretion and cell surface expression of IgE and IgG1. It also regulates the expression of the low affinity Fc receptor for IgE (CD23) on both lymphocytes and monocytes. Positively regulates IL31RA expression in macrophages. Stimulates autophagy in dendritic cells by interfering with mTORC1 signaling and through the induction of RUFY4. This Mesocricetus auratus (Golden hamster) protein is Interleukin-4 (IL4).